Here is a 372-residue protein sequence, read N- to C-terminus: 4-hydroxy-3-methylbut-2-en-1-yl diphosphate synthase (flavodoxin) (372 aa).

[4Fe-4S] cluster contacts are provided by cysteine 270, cysteine 273, cysteine 305, and glutamate 312.

Belongs to the IspG family. [4Fe-4S] cluster serves as cofactor.

It carries out the reaction (2E)-4-hydroxy-3-methylbut-2-enyl diphosphate + oxidized [flavodoxin] + H2O + 2 H(+) = 2-C-methyl-D-erythritol 2,4-cyclic diphosphate + reduced [flavodoxin]. The protein operates within isoprenoid biosynthesis; isopentenyl diphosphate biosynthesis via DXP pathway; isopentenyl diphosphate from 1-deoxy-D-xylulose 5-phosphate: step 5/6. Its function is as follows. Converts 2C-methyl-D-erythritol 2,4-cyclodiphosphate (ME-2,4cPP) into 1-hydroxy-2-methyl-2-(E)-butenyl 4-diphosphate. The chain is 4-hydroxy-3-methylbut-2-en-1-yl diphosphate synthase (flavodoxin) from Marinobacter nauticus (strain ATCC 700491 / DSM 11845 / VT8) (Marinobacter aquaeolei).